The sequence spans 356 residues: Alpha-N-acetylneuraminide alpha-2,8-sialyltransferase (356 aa).

Residues 1 to 29 (MSPCGRARRQTSRGAMAVLAWKFPRTRLP) lie on the Cytoplasmic side of the membrane. Residues 30–48 (MGASALCVVVLCWLYIFPV) traverse the membrane as a helical; Signal-anchor for type II membrane protein segment. Topologically, residues 49–356 (YRLPNEKEIV…CEDTSLQPTS (308 aa)) are lumenal. 2 N-linked (GlcNAc...) asparagine glycosylation sites follow: asparagine 71 and asparagine 119. Disulfide bonds link cysteine 138/cysteine 287 and cysteine 152/cysteine 347. Asparagine 143 and asparagine 166 together coordinate CMP-N-acetyl-beta-neuraminate. Residues asparagine 214 and asparagine 245 are each glycosylated (N-linked (GlcNAc...) asparagine). CMP-N-acetyl-beta-neuraminate-binding residues include serine 274, threonine 275, glycine 276, tryptophan 296, and histidine 310. Histidine 322 (proton donor/acceptor) is an active-site residue.

The protein belongs to the glycosyltransferase 29 family.

The protein resides in the golgi apparatus membrane. It catalyses the reaction an N-acetyl-alpha-neuraminyl-(2-&gt;3)-beta-D-galactosyl derivative + CMP-N-acetyl-beta-neuraminate = an N-acetyl-alpha-neuraminyl-(2-&gt;8)-N-acetyl-alpha-neuraminyl-(2-&gt;3)-beta-D-galactosyl derivative + CMP + H(+). It carries out the reaction a ganglioside GM3 (d18:1(4E)) + CMP-N-acetyl-beta-neuraminate = a ganglioside GD3 (d18:1(4E)) + CMP + H(+). The catalysed reaction is a ganglioside GD3 (d18:1(4E)) + CMP-N-acetyl-beta-neuraminate = a ganglioside GT3 (d18:1(4E)) + CMP + H(+). The enzyme catalyses a ganglioside GD1a (d18:1(4E)) + CMP-N-acetyl-beta-neuraminate = a ganglioside GT1a (d18:1(4E)) + CMP + H(+). It catalyses the reaction a ganglioside GT1b (d18:1(4E)) + CMP-N-acetyl-beta-neuraminate = a ganglioside GQ1b (d18:1(4E)) + CMP + H(+). It carries out the reaction a ganglioside GM1b (d18:1(4E)) + CMP-N-acetyl-beta-neuraminate = a ganglioside GD1c (d18:1(4E)) + CMP + H(+). The catalysed reaction is a ganglioside GD3 + CMP-N-acetyl-beta-neuraminate = a ganglioside GT3 + CMP + H(+). The enzyme catalyses [alpha-N-acetylneuraminyl-(2-&gt;8)](n)-alpha-N-acetylneuraminyl-(2-&gt;8)-alpha-N-acetylneuraminyl-(2-&gt;3)-beta-D-galactosyl-(1-&gt;4)-beta-D-glucosyl-(1&lt;-&gt;1)-ceramide + CMP-N-acetyl-beta-neuraminate = [alpha-N-acetylneuraminyl-(2-&gt;8)](n+1)-alpha-N-acetylneuraminyl-(2-&gt;8)-alpha-N-acetylneuraminyl-(2-&gt;3)-beta-D-galactosyl-(1-&gt;4)-beta-D-glucosyl-(1&lt;-&gt;1)-ceramide + CMP + H(+). Its pathway is protein modification; protein glycosylation. The protein operates within lipid metabolism; sphingolipid metabolism. Catalyzes the addition of sialic acid in alpha 2,8-linkage to the sialic acid moiety of the ganglioside GM3 to form ganglioside GD3; gangliosides are a subfamily of complex glycosphingolipds that contain one or more residues of sialic acid. Can catalyze the addition of a second alpha-2,8- sialic acid to GD3 to form GT3. Can use GM1b, GD1a and GT1b as acceptor substrates to synthesize GD1c, GT1a and GQ1b respectively. This chain is Alpha-N-acetylneuraminide alpha-2,8-sialyltransferase, found in Pan troglodytes (Chimpanzee).